A 432-amino-acid polypeptide reads, in one-letter code: MAEGGQAQQQPPQLGPGAAARGMKRESEVELPVPGAGADGPEPGLSKRPRTEEAADEGMQGNQEPTTTPDAMVQPFTTIPFPPPPQNGIPTEYGVPHTQDYAGQTSEHNLTLYGSSQPHGEQSSNSPSNQNGSLTQTEGGAQTDGQQSQTQSSENSESKSTPKRLHVSNIPFRFRDPDLRQMFGQFGKILDVEIIFNERGSKGFGFVTFENSADADRAREKLHGTVVEGRKIEVNNATARVMTNKKMVTPYANGWKLSPVVGAVYGPELYAASSFQADVSLGNEAAVPLSGRGGINTYIPLISLPLVPGFPYPTAATTAAAFRGAHLRGRGRTVYGAVRAVPPTAIPAYPGVVYQDGFYGADLYGGYAAYRYAQPATATAATAAAAAAAAYSDGYGRVYTADPYHALAPAASYGVGAVASLYRGGYSRFAPY.

The segment covering 1–21 (MAEGGQAQQQPPQLGPGAAAR) has biased composition (low complexity). Positions 1–169 (MAEGGQAQQQ…STPKRLHVSN (169 aa)) are disordered. 2 stretches are compositionally biased toward polar residues: residues 60–69 (QGNQEPTTTP) and 101–121 (YAGQTSEHNLTLYGSSQPHGE). A compositionally biased stretch (low complexity) spans 122 to 159 (QSSNSPSNQNGSLTQTEGGAQTDGQQSQTQSSENSESK). One can recognise an RRM domain in the interval 163–239 (KRLHVSNIPF…RKIEVNNATA (77 aa)). Omega-N-methylarginine is present on Arg323. Residues Arg339 and Arg371 each carry the asymmetric dimethylarginine modification. Asymmetric dimethylarginine; alternate occurs at positions 423 and 428. Omega-N-methylarginine; alternate is present on residues Arg423 and Arg428.

As to quaternary structure, interacts with ER-alpha N-terminal activation domain. Interacts with RBPMS; the interaction allows cooperative assembly of stable cell-specific alternative splicing regulatory complexes.

Its subcellular location is the nucleus. It localises to the cytoplasm. Functionally, RNA-binding protein that regulates alternative splicing events by binding to 5'-UGCAUGU-3' elements. Prevents binding of U2AF2 to the 3'-splice site. Regulates alternative splicing of tissue-specific exons and of differentially spliced exons during erythropoiesis. Seems to act as a coregulatory factor of ER-alpha. Together with RNA binding proteins RBPMS and MBNL1/2, activates vascular smooth muscle cells alternative splicing events. This Rattus norvegicus (Rat) protein is RNA binding protein fox-1 homolog 2 (Rbfox2).